Here is a 390-residue protein sequence, read N- to C-terminus: Ammonium/H(+) antiporter subunit AmhT (390 aa).

10 helical membrane passes run 2 to 22 (VIPE…TGFV), 31 to 51 (VVIF…SHLL), 52 to 72 (HFAG…EFPL), 94 to 114 (FGVT…SLII), 143 to 163 (FMLG…AVLV), 178 to 198 (LLVV…VFLF), 212 to 232 (DLFI…ALYL), 266 to 286 (LLLP…EGIP), 288 to 308 (IPLL…VGVL), and 351 to 371 (VFIL…PSIA).

Belongs to the monovalent cation:proton antiporter 2 (CPA2) transporter (TC 2.A.37) family. Interacts with AmhM.

The protein resides in the cell membrane. With respect to regulation, amhT alone exhibits antiport activity, but interaction with AmhM confers different properties, such as higher KM for potassium. Functionally, ammonium/proton antiporter that mediates the efflux of ammonium ions. Can also transport potassium or rubidium, but not sodium or lithium. This Alkalihalophilus pseudofirmus (strain ATCC BAA-2126 / JCM 17055 / OF4) (Bacillus pseudofirmus) protein is Ammonium/H(+) antiporter subunit AmhT (amhT).